The chain runs to 192 residues: Putative integrase/recombinase y4gC (192 aa).

Residues 1–183 (MPSILERDQI…ATEDLRAIAL (183 aa)) enclose the Tyr recombinase domain. Catalysis depends on residues arginine 41, lysine 66, histidine 135, arginine 138, and histidine 161. The active-site O-(3'-phospho-DNA)-tyrosine intermediate is tyrosine 170.

It belongs to the 'phage' integrase family.

The polypeptide is Putative integrase/recombinase y4gC (Sinorhizobium fredii (strain NBRC 101917 / NGR234)).